A 172-amino-acid chain; its full sequence is Translationally-controlled tumor protein (172 aa).

A TCTP domain is found at 1–172 (MIIYRDLISH…FKDGLEMEKC (172 aa)). Residue Ser46 is modified to Phosphoserine; by PLK1. Phosphoserine is present on Ser53. Ser64 bears the Phosphoserine; by PLK1 mark. A required for reduction of TSC22D1 protein stability region spans residues 70–172 (VDIVMNHHLQ…FKDGLEMEKC (103 aa)).

The protein belongs to the TCTP family. Homodimer. Interacts with STEAP3. Interacts with TSC22D1; interaction results in the destabilization of TSC22D1 protein. Found in several healthy and tumoral cells including erythrocytes, hepatocytes, macrophages, platelets, keratinocytes, erythroleukemia cells, gliomas, melanomas, hepatoblastomas, and lymphomas. It cannot be detected in kidney and renal cell carcinoma (RCC). Expressed in placenta and prostate.

It localises to the cytoplasm. Functionally, involved in calcium binding and microtubule stabilization. Acts as a negative regulator of TSC22D1-mediated apoptosis, via interaction with and destabilization of TSC22D1 protein. The sequence is that of Translationally-controlled tumor protein (TPT1) from Homo sapiens (Human).